Reading from the N-terminus, the 317-residue chain is 4-hydroxy-3-methylbut-2-enyl diphosphate reductase (317 aa).

Cys12 is a [4Fe-4S] cluster binding site. The (2E)-4-hydroxy-3-methylbut-2-enyl diphosphate site is built by His41 and His74. Positions 41 and 74 each coordinate dimethylallyl diphosphate. Positions 41 and 74 each coordinate isopentenyl diphosphate. Cys97 is a [4Fe-4S] cluster binding site. Position 125 (His125) interacts with (2E)-4-hydroxy-3-methylbut-2-enyl diphosphate. Dimethylallyl diphosphate is bound at residue His125. His125 lines the isopentenyl diphosphate pocket. Glu127 acts as the Proton donor in catalysis. Thr168 is a (2E)-4-hydroxy-3-methylbut-2-enyl diphosphate binding site. Cys198 is a binding site for [4Fe-4S] cluster. Ser226, Ser227, Asn228, and Ser270 together coordinate (2E)-4-hydroxy-3-methylbut-2-enyl diphosphate. Residues Ser226, Ser227, Asn228, and Ser270 each coordinate dimethylallyl diphosphate. Isopentenyl diphosphate is bound by residues Ser226, Ser227, Asn228, and Ser270.

This sequence belongs to the IspH family. As to quaternary structure, homodimer. [4Fe-4S] cluster is required as a cofactor.

It catalyses the reaction isopentenyl diphosphate + 2 oxidized [2Fe-2S]-[ferredoxin] + H2O = (2E)-4-hydroxy-3-methylbut-2-enyl diphosphate + 2 reduced [2Fe-2S]-[ferredoxin] + 2 H(+). It carries out the reaction dimethylallyl diphosphate + 2 oxidized [2Fe-2S]-[ferredoxin] + H2O = (2E)-4-hydroxy-3-methylbut-2-enyl diphosphate + 2 reduced [2Fe-2S]-[ferredoxin] + 2 H(+). It functions in the pathway isoprenoid biosynthesis; dimethylallyl diphosphate biosynthesis; dimethylallyl diphosphate from (2E)-4-hydroxy-3-methylbutenyl diphosphate: step 1/1. It participates in isoprenoid biosynthesis; isopentenyl diphosphate biosynthesis via DXP pathway; isopentenyl diphosphate from 1-deoxy-D-xylulose 5-phosphate: step 6/6. Catalyzes the conversion of 1-hydroxy-2-methyl-2-(E)-butenyl 4-diphosphate (HMBPP) into a mixture of isopentenyl diphosphate (IPP) and dimethylallyl diphosphate (DMAPP). Acts in the terminal step of the DOXP/MEP pathway for isoprenoid precursor biosynthesis. This chain is 4-hydroxy-3-methylbut-2-enyl diphosphate reductase, found in Yersinia pseudotuberculosis serotype IB (strain PB1/+).